A 736-amino-acid chain; its full sequence is MAVSSSSDVIVLSVGIILAALYLFREQIFSAAKPKTVQVPSSKAAAGGNGNPRDFIAKMKEGKKRIVIFYGSQTGTAEEYAIRLAKEAKSKFGLASLVCDPEEYDFENLDQVPEDCCVFFVMATYGEGEPTDNAVQLCQNLSDESFEFSNGEHKLPGLKYVIFGLGNKTYEHYNLISRNVDRDLQKMGAIRIGERGEGDDDKSMEEDYLEWKDGMWEAFAKAMNVEEGQGGDSPDFVVTEVFDHPEEKVYLGELSARALTRTKGIHDAKNPYPAPIIAAKELFAPGSDRNCVHIELSTESSGITYQHGDHVGVWPSNADKEVDRLLYALGLHEKKDTVINIESLDPALAKVPFPVPTTYATVLRHYIDISALAGRQILGVLAKFAPNPEAEAVLKDLNSNKEHYQNIVANGCMKLGEVLQYAAGNDLHADPTASNTTAWKIPFDIIVSSIPRLQPRYYSISSSPKLYPNAIHATVVVLKYKSEKAPRVEERWIYGVGSNFLLNLKYASHHDKAATLVSDDSPSEPSIVSHYPTYSIEGPRGAYKQGDVVKVPIHVRRSTFRLPTNPKSPVIMIGPGTGVAPFRGFVQERVAMARRTIEKHGPEGLADWGPIRLYYGCRRSDQDFLYKDEWPEYAKELHGKFIMRCAFSREPPYKPDGSKIYVQDLIWEDAEQIADAILNGKGYVYICGDAKSMSKSVEETLCRILGEAKGGSAEVEGAAELKLLKERNRLLLDVWS.

Residue M1 is a topological domain, lumenal. A helical transmembrane segment spans residues 2-24 (AVSSSSDVIVLSVGIILAALYLF). Residues 25-736 (REQIFSAAKP…RNRLLLDVWS (712 aa)) are Cytoplasmic-facing. The region spanning 66 to 216 (IVIFYGSQTG…DYLEWKDGMW (151 aa)) is the Flavodoxin-like domain. FMN contacts are provided by residues 72–77 (SQTGTA), 123–126 (ATYG), 165–174 (LGNKTYEHYN), and D200. The FAD-binding FR-type domain occupies 269–546 (KNPYPAPIIA…EGPRGAYKQG (278 aa)). R289 contributes to the NADP(+) binding site. Residues 456–459 (RYYS), 474–476 (TVV), Y480, and 495–498 (GVGS) contribute to the FAD site. NADP(+)-binding positions include T577, 648 to 649 (SR), and 659 to 663 (KIYVQ). W735 provides a ligand contact to FAD.

Belongs to the NADPH--cytochrome P450 reductase family. It in the N-terminal section; belongs to the flavodoxin family. This sequence in the C-terminal section; belongs to the flavoprotein pyridine nucleotide cytochrome reductase family. It depends on FAD as a cofactor. FMN serves as cofactor.

The protein resides in the endoplasmic reticulum membrane. It localises to the mitochondrion outer membrane. It is found in the cell membrane. The enzyme catalyses 2 oxidized [cytochrome P450] + NADPH = 2 reduced [cytochrome P450] + NADP(+) + H(+). Functionally, this enzyme is required for electron transfer from NADP to cytochrome P450 in microsomes. It can also provide electron transfer to heme oxygenase and cytochrome B5. Involved in ergosterol biosynthesis. The chain is NADPH--cytochrome P450 reductase (CPR) from Phanerodontia chrysosporium (White-rot fungus).